The primary structure comprises 326 residues: MQSNSLLKPRIIDVQSVSPVQARVTMEPFERGFGHTLGNALRRILLSSLPGYAPTEVSIEGVLHEYSTLDGVREDIVDLLLNLKGVVLKLHSRSEATLRLAKSGDGVVTARDIEVGHDVEIINPDHVIAHLAPGGKLDMQIKVEEGRGYVPGNVRPAAGDTKTIGRVVLDASFSPVRRVSYLVESARVEQRTDLDRLVIDIETNGAVDPEEAIRYAARVLMDQLSVFADLEGTAPVVEQSAAQTIDPVLLRPVDDLELTVRSANCLKAENIYYIGDLIQRTETELLKTPNLGRKSLNEIKEVLASRGLTLGMKLENWPPAGLEKLG.

The segment at 1–231 is alpha N-terminal domain (alpha-NTD); it reads MQSNSLLKPR…DQLSVFADLE (231 aa). The tract at residues 245–326 is alpha C-terminal domain (alpha-CTD); that stretch reads IDPVLLRPVD…WPPAGLEKLG (82 aa).

The protein belongs to the RNA polymerase alpha chain family. In terms of assembly, homodimer. The RNAP catalytic core consists of 2 alpha, 1 beta, 1 beta' and 1 omega subunit. When a sigma factor is associated with the core the holoenzyme is formed, which can initiate transcription.

The enzyme catalyses RNA(n) + a ribonucleoside 5'-triphosphate = RNA(n+1) + diphosphate. DNA-dependent RNA polymerase catalyzes the transcription of DNA into RNA using the four ribonucleoside triphosphates as substrates. The polypeptide is DNA-directed RNA polymerase subunit alpha (Aromatoleum aromaticum (strain DSM 19018 / LMG 30748 / EbN1) (Azoarcus sp. (strain EbN1))).